Here is a 385-residue protein sequence, read N- to C-terminus: Proteinase-activated receptor 4 (385 aa).

The N-terminal stretch at 1 to 17 (MWGRLLLWPLVLGFSLS) is a signal peptide. Positions 18–47 (GGTQTPSVYDESGSTGGGDDSTPSILPAPR) are cleaved as a propeptide — removed for receptor activation. A disordered region spans residues 21 to 42 (QTPSVYDESGSTGGGDDSTPSI). The Extracellular segment spans residues 48–82 (GYPGQVCANDSDTLELPDSSRALLLGWVPTRLVPA). Asn-56 is a glycosylation site (N-linked (GlcNAc...) asparagine). A helical membrane pass occupies residues 83-103 (LYGLVLVVGLPANGLALWVLA). At 104-108 (TQAPR) the chain is on the cytoplasmic side. Residues 109 to 129 (LPSTMLLMNLAAADLLLALAL) form a helical membrane-spanning segment. Over 130–151 (PPRIAYHLRGQRWPFGEAACRL) the chain is Extracellular. Cys-149 and Cys-228 are disulfide-bonded. Residues 152 to 172 (ATAALYGHMYGSVLLLAAVSL) form a helical membrane-spanning segment. The Cytoplasmic segment spans residues 173-192 (DRYLALVHPLRARALRGRRL). Residues 193–213 (ALGLCMAAWLMAAALALPLTL) traverse the membrane as a helical segment. Residues 214 to 247 (QRQTFRLARSDRVLCHDALPLDAQASHWQPAFTC) lie on the Extracellular side of the membrane. Residues 248–268 (LALLGCFLPLLAMLLCYGATL) traverse the membrane as a helical segment. The Cytoplasmic segment spans residues 269 to 283 (HTLAASGRRYGHALR). Residues 284-304 (LTAVVLASAVAFFVPSNLLLL) traverse the membrane as a helical segment. Residues 305-319 (LHYSDPSPSAWGNLY) lie on the Extracellular side of the membrane. The helical transmembrane segment at 320–343 (GAYVPSLALSTLNSCVDPFIYYYV) threads the bilayer. Over 344-385 (SAEFRDKVRAGLFQRSPGDTVASKASAEGGSRGMGTHSSLLQ) the chain is Cytoplasmic. The tract at residues 362 to 385 (DTVASKASAEGGSRGMGTHSSLLQ) is disordered.

This sequence belongs to the G-protein coupled receptor 1 family. Post-translationally, a proteolytic cleavage generates a new N-terminus that functions as a tethered ligand. As to expression, widely expressed, with highest levels in lung, pancreas, thyroid, testis and small intestine. Not expressed in brain, kidney, spinal cord and peripheral blood leukocytes. Also detected in platelets.

The protein localises to the cell membrane. Activated upon interaction by mucunain, a cowhage (Mucuna pruriens) plant cysteine proteinase. Functionally, receptor for activated thrombin or trypsin coupled to G proteins that stimulate phosphoinositide hydrolysis. May play a role in platelets activation. The protein is Proteinase-activated receptor 4 (F2RL3) of Homo sapiens (Human).